Here is a 371-residue protein sequence, read N- to C-terminus: Nicotinate-nucleotide pyrophosphorylase [carboxylating], chloroplastic (371 aa).

Residues 1 to 48 (MPAAAAAAAPPNPNVLQLAPRLRGLVSFPSSYSSSSPFSNRLRLRLPR) constitute a chloroplast transit peptide. Substrate is bound by residues R162, 193–195 (TRK), R217, K227, E260, D287, 319–321 (SGN), and 340–342 (SGA).

This sequence belongs to the NadC/ModD family.

The protein localises to the plastid. Its subcellular location is the chloroplast. The catalysed reaction is nicotinate beta-D-ribonucleotide + CO2 + diphosphate = quinolinate + 5-phospho-alpha-D-ribose 1-diphosphate + 2 H(+). The protein operates within cofactor biosynthesis; NAD(+) biosynthesis; nicotinate D-ribonucleotide from quinolinate: step 1/1. Its function is as follows. Involved in the catabolism of quinolinic acid (QA). The protein is Nicotinate-nucleotide pyrophosphorylase [carboxylating], chloroplastic of Oryza sativa subsp. japonica (Rice).